A 525-amino-acid chain; its full sequence is Ribosomal protein S6 kinase beta-1 (525 aa).

The TOS motif motif lies at 28–32 (FDIDL). Residues 32 to 46 (LDQPEDAGSEDELEE) show a composition bias toward acidic residues. The tract at residues 32-54 (LDQPEDAGSEDELEEGGQLNESM) is disordered. The 262-residue stretch at 91-352 (FELLRVLGKG…AGEVQAHPFF (262 aa)) folds into the Protein kinase domain. ATP contacts are provided by residues 97 to 105 (LGKGGYGKV) and Lys-123. Asp-218 (proton acceptor) is an active-site residue. Thr-252 is modified (phosphothreonine; by PDPK1). The 71-residue stretch at 353-423 (RHINWEELLA…VAPSVLESVK (71 aa)) folds into the AGC-kinase C-terminal domain. Residues 380–399 (SQFDSKFTRQTPVDSPDDST) are disordered. Residues 381–399 (QFDSKFTRQTPVDSPDDST) show a composition bias toward polar residues. Residue Ser-394 is modified to Phosphoserine. Thr-412 carries the phosphothreonine; by MTOR, NEK6 and NEK7 modification. Residues 424–525 (EKFSFEPKIR…KRPEHLRMNL (102 aa)) form an autoinhibitory domain region. Residues Ser-434 and Ser-441 each carry the phosphoserine modification. The residue at position 444 (Thr-444) is a Phosphothreonine. A phosphoserine mark is found at Ser-447 and Ser-452. Position 516 is an N6-acetyllysine (Lys-516).

It belongs to the protein kinase superfamily. AGC Ser/Thr protein kinase family. S6 kinase subfamily. As to quaternary structure, interacts with PPP1R9A/neurabin-1. Interacts with RPTOR. Interacts with IRS1. Interacts with EIF3B and EIF3C. Interacts with TRAF4. Interacts with POLDIP3. Interacts (via N-terminus) with IER5. In terms of processing, phosphorylation at Thr-412 is regulated by mTORC1. The phosphorylation at this site is maintained by an agonist-dependent autophosphorylation mechanism. Activated by phosphorylation at Thr-252 by PDPK1. Dephosphorylation by PPP1CC at Thr-412 in mitochondrion.

The protein resides in the cytoplasm. It is found in the synapse. The protein localises to the synaptosome. Its subcellular location is the mitochondrion outer membrane. It localises to the mitochondrion. The catalysed reaction is L-seryl-[protein] + ATP = O-phospho-L-seryl-[protein] + ADP + H(+). It catalyses the reaction L-threonyl-[protein] + ATP = O-phospho-L-threonyl-[protein] + ADP + H(+). Activation requires multiple phosphorylation events on serine/threonine residues. Activation appears to be first mediated by phosphorylation of multiple sites in the autoinhibitory domain, which facilitates phosphorylation at Thr-412, disrupting the autoinhibitory mechanism and allowing phosphorylation of Thr-252 by PDPK1. The active conformation of the kinase is believed to be stabilized by a mechanism involving three conserved phosphorylation sites located in the kinase domain activation loop (Thr-252) and in the AGC-kinase C-terminal domain (Ser-394 in the middle of the tail/linker region and Thr-412 within a hydrophobic motif at its end). Activated by mTORC1; isoform Alpha I and isoform Alpha II are sensitive to rapamycin, which inhibits activating phosphorylation at Thr-412. Activated by PDPK1. Its function is as follows. Serine/threonine-protein kinase that acts downstream of mTOR signaling in response to growth factors and nutrients to promote cell proliferation, cell growth and cell cycle progression. Regulates protein synthesis through phosphorylation of EIF4B, RPS6 and EEF2K, and contributes to cell survival by repressing the pro-apoptotic function of BAD. Under conditions of nutrient depletion, the inactive form associates with the EIF3 translation initiation complex. Upon mitogenic stimulation, phosphorylation by the mechanistic target of rapamycin complex 1 (mTORC1) leads to dissociation from the EIF3 complex and activation. The active form then phosphorylates and activates several substrates in the pre-initiation complex, including the EIF2B complex and the cap-binding complex component EIF4B. Also controls translation initiation by phosphorylating a negative regulator of EIF4A, PDCD4, targeting it for ubiquitination and subsequent proteolysis. Promotes initiation of the pioneer round of protein synthesis by phosphorylating POLDIP3/SKAR. In response to IGF1, activates translation elongation by phosphorylating EEF2 kinase (EEF2K), which leads to its inhibition and thus activation of EEF2. Also plays a role in feedback regulation of mTORC2 by mTORC1 by phosphorylating MAPKAP1/SIN1, MTOR and RICTOR, resulting in the inhibition of mTORC2 and AKT1 signaling. Also involved in feedback regulation of mTORC1 and mTORC2 by phosphorylating DEPTOR. Mediates cell survival by phosphorylating the pro-apoptotic protein BAD and suppressing its pro-apoptotic function. Phosphorylates mitochondrial URI1 leading to dissociation of a URI1-PPP1CC complex. The free mitochondrial PPP1CC can then dephosphorylate RPS6KB1 at Thr-412, which is proposed to be a negative feedback mechanism for the RPS6KB1 anti-apoptotic function. Mediates TNF-alpha-induced insulin resistance by phosphorylating IRS1 at multiple serine residues, resulting in accelerated degradation of IRS1. In cells lacking functional TSC1-2 complex, constitutively phosphorylates and inhibits GSK3B. May be involved in cytoskeletal rearrangement through binding to neurabin. Phosphorylates and activates the pyrimidine biosynthesis enzyme CAD, downstream of MTOR. Following activation by mTORC1, phosphorylates EPRS and thereby plays a key role in fatty acid uptake by adipocytes and also most probably in interferon-gamma-induced translation inhibition. In Mus musculus (Mouse), this protein is Ribosomal protein S6 kinase beta-1 (Rps6kb1).